Reading from the N-terminus, the 509-residue chain is MEEIQRYLQPDRSQQHNFLYPLIFQEYIYALAHDHGLNRNRSVLLENPGYNNKFSLLIVKRLITRMYQQNNFLISTNDSNKNEFLGCNKSLYSQMISEGFAFIVEIPFSLRLISSLSSFEGKKIFKSHNLRSIHSTFPFLEDNFSHLNYVLDILIPYPVHLEILVQTLRYWVKDASSLHLLRFFLHEFWNLNSLITSKKPGYSFSKKNQRFFFFLYNSYVYECESTFVFLRNQSSRLRSTSFGALLERINFYGKMERLVEVFTKDLQVTLWLFKDPFMHYVRYQEKSILASKGTFLLMNKWKFYLVNFWQCHFSLCFHTGRIHINQLSNHSRDFMGYLSSVRLNPSMLRSQMLENSFLINNAIKKFDTLVPIIPLIGSLAKANFCTVLGHPISKPVWSDLSDSDIIDRFGRICRNLFHYYSGSSKKKTLYRIKYILRLSCARTLARKHKSTVRTFLKRSGSELLEEFLTSEEQVLSLTFPRASSSLWGVYRSRIWYLDIFCINDLANYQ.

This sequence belongs to the intron maturase 2 family. MatK subfamily.

It localises to the plastid. Its subcellular location is the chloroplast. Usually encoded in the trnK tRNA gene intron. Probably assists in splicing its own and other chloroplast group II introns. The chain is Maturase K from Nicotiana paniculata.